Here is a 952-residue protein sequence, read N- to C-terminus: Isoleucine--tRNA ligase (952 aa).

The short motif at 58–68 (PYANGDIHIGH) is the 'HIGH' region element. Glu576 is an L-isoleucyl-5'-AMP binding site. Residues 617–621 (KMSKS) carry the 'KMSKS' region motif. ATP is bound at residue Lys620. Cys915, Cys918, Cys935, and Cys938 together coordinate Zn(2+).

It belongs to the class-I aminoacyl-tRNA synthetase family. IleS type 1 subfamily. As to quaternary structure, monomer. Zn(2+) serves as cofactor.

Its subcellular location is the cytoplasm. The enzyme catalyses tRNA(Ile) + L-isoleucine + ATP = L-isoleucyl-tRNA(Ile) + AMP + diphosphate. In terms of biological role, catalyzes the attachment of isoleucine to tRNA(Ile). As IleRS can inadvertently accommodate and process structurally similar amino acids such as valine, to avoid such errors it has two additional distinct tRNA(Ile)-dependent editing activities. One activity is designated as 'pretransfer' editing and involves the hydrolysis of activated Val-AMP. The other activity is designated 'posttransfer' editing and involves deacylation of mischarged Val-tRNA(Ile). The protein is Isoleucine--tRNA ligase of Aliivibrio fischeri (strain ATCC 700601 / ES114) (Vibrio fischeri).